The chain runs to 638 residues: 1-deoxy-D-xylulose-5-phosphate synthase (638 aa).

Residues His-72 and 113–115 (GHA) contribute to the thiamine diphosphate site. A Mg(2+)-binding site is contributed by Asp-144. Residues 145-146 (GA), Asn-174, Tyr-289, and Glu-372 contribute to the thiamine diphosphate site. Asn-174 contributes to the Mg(2+) binding site.

Belongs to the transketolase family. DXPS subfamily. In terms of assembly, homodimer. Mg(2+) serves as cofactor. Requires thiamine diphosphate as cofactor.

The catalysed reaction is D-glyceraldehyde 3-phosphate + pyruvate + H(+) = 1-deoxy-D-xylulose 5-phosphate + CO2. Its pathway is metabolic intermediate biosynthesis; 1-deoxy-D-xylulose 5-phosphate biosynthesis; 1-deoxy-D-xylulose 5-phosphate from D-glyceraldehyde 3-phosphate and pyruvate: step 1/1. Catalyzes the acyloin condensation reaction between C atoms 2 and 3 of pyruvate and glyceraldehyde 3-phosphate to yield 1-deoxy-D-xylulose-5-phosphate (DXP). This chain is 1-deoxy-D-xylulose-5-phosphate synthase, found in Gloeobacter violaceus (strain ATCC 29082 / PCC 7421).